Reading from the N-terminus, the 391-residue chain is Odorant receptor 67d (391 aa).

Residues 1–45 (MLKMAKVEPVERYCKVIRMIRFCVGFCGNDVADPNFRMWWLTYAV) are Cytoplasmic-facing. A helical membrane pass occupies residues 46–66 (MAAIAFFFACTGYTIYVGVVI). Residues 67–71 (NGDLT) are Extracellular-facing. Residues 72-92 (IILQALAMVGSAVQGLTKLLV) traverse the membrane as a helical segment. Over 93 to 140 (TANNASHMREVQNTYEDIYREYGSKGDEYAKCLEKRIRITWTLLIGFM) the chain is Cytoplasmic. A helical transmembrane segment spans residues 141 to 161 (LVYIILLGLVITFPIFYLLIL). Over 162-164 (HQK) the chain is Extracellular. Residues 165–185 (VLVMQFLIPFLDHTTDGGHLI) form a helical membrane-spanning segment. Residues 186 to 191 (LTAAHV) lie on the Cytoplasmic side of the membrane. Residues 192 to 212 (ILITFGGFGNYGGDMYLFLFV) traverse the membrane as a helical segment. Residues 213 to 268 (THVPLIKDIFCVKLTEFNELVMKRNDFPKVRAMLCDLLVWHQLYTRMLQTTKKIYS) lie on the Extracellular side of the membrane. The chain crosses the membrane as a helical span at residues 269–289 (IVLFVQLSTTCVGLLCTISCI). Residues 290-297 (FMKAWPAA) lie on the Cytoplasmic side of the membrane. The helical transmembrane segment at 298–318 (PLYLLYAAITLYTFCGLGTLV) threads the bilayer. Residues 319 to 391 (ENSNEDFLSV…FSMMLMNYLG (73 aa)) are Extracellular-facing.

This sequence belongs to the insect chemoreceptor superfamily. Heteromeric odorant receptor channel (TC 1.A.69) family. Or67d subfamily. In terms of assembly, interacts with Orco. Complexes exist early in the endomembrane system in olfactory sensory neurons (OSNs), coupling these complexes to the conserved ciliary trafficking pathway. In terms of tissue distribution, expressed in antenna.

The protein resides in the cell membrane. Its function is as follows. Plays a role in detection and sensitivity to pheromones and signal transduction of the fatty-acid-derived male pheromone 11-cis vaccenyl acetate (cVA). Acts in concert with Snmp and lush to capture cVA molecules on the surface of Or67d expressing olfactory dendrites and facilitate their transfer to the odorant-receptor Orco complex. Necessary to mediate behavioral responses to cVA by regulating both male and female mating behavior. Activation of Or67d neurons by cVA inhibits courtship of other males, whereas in females their activation promotes receptivity to other males. May form a complex with Orco to form odorant-sensing units, providing sensitive and prolonged odorant signaling and calcium permeability. The polypeptide is Odorant receptor 67d (Or67d) (Drosophila melanogaster (Fruit fly)).